We begin with the raw amino-acid sequence, 144 residues long: 3-dehydroquinate dehydratase (144 aa).

Tyrosine 24 (proton acceptor) is an active-site residue. The substrate site is built by asparagine 76, histidine 82, and aspartate 89. Histidine 102 (proton donor) is an active-site residue. Substrate is bound by residues 103 to 104 and arginine 113; that span reads LS.

It belongs to the type-II 3-dehydroquinase family. As to quaternary structure, homododecamer.

It catalyses the reaction 3-dehydroquinate = 3-dehydroshikimate + H2O. It functions in the pathway metabolic intermediate biosynthesis; chorismate biosynthesis; chorismate from D-erythrose 4-phosphate and phosphoenolpyruvate: step 3/7. Catalyzes a trans-dehydration via an enolate intermediate. In Bordetella avium (strain 197N), this protein is 3-dehydroquinate dehydratase.